The chain runs to 190 residues: Large ribosomal subunit protein eL19 (190 aa).

Disordered stretches follow at residues 56-85 (TVHS…KGTK) and 166-190 (NRAA…EAAN). Residues 72–83 (AGRHMGYGKRKG) show a composition bias toward basic residues. Residues 166 to 184 (NRAARERRQQRLAEKKEAL) are compositionally biased toward basic and acidic residues.

It belongs to the eukaryotic ribosomal protein eL19 family. As to quaternary structure, component of the large ribosomal subunit. Mature ribosomes consist of a small (40S) and a large (60S) subunit. The 40S subunit contains about 32 different proteins and 1 molecule of RNA (18S). The 60S subunit contains 45 different proteins and 3 molecules of RNA (25S, 5.8S and 5S).

Its subcellular location is the cytoplasm. In terms of biological role, component of the ribosome, a large ribonucleoprotein complex responsible for the synthesis of proteins in the cell. The small ribosomal subunit (SSU) binds messenger RNAs (mRNAs) and translates the encoded message by selecting cognate aminoacyl-transfer RNA (tRNA) molecules. The large subunit (LSU) contains the ribosomal catalytic site termed the peptidyl transferase center (PTC), which catalyzes the formation of peptide bonds, thereby polymerizing the amino acids delivered by tRNAs into a polypeptide chain. The nascent polypeptides leave the ribosome through a tunnel in the LSU and interact with protein factors that function in enzymatic processing, targeting, and the membrane insertion of nascent chains at the exit of the ribosomal tunnel. RPL19A may play a role in the last stages of translation initiation, in particular subunit joining and shedding/releasing factors. This Candida albicans (strain SC5314 / ATCC MYA-2876) (Yeast) protein is Large ribosomal subunit protein eL19.